The chain runs to 449 residues: Probable glycine dehydrogenase (decarboxylating) subunit 1 (449 aa).

Belongs to the GcvP family. N-terminal subunit subfamily. In terms of assembly, the glycine cleavage system is composed of four proteins: P, T, L and H. In this organism, the P 'protein' is a heterodimer of two subunits.

The catalysed reaction is N(6)-[(R)-lipoyl]-L-lysyl-[glycine-cleavage complex H protein] + glycine + H(+) = N(6)-[(R)-S(8)-aminomethyldihydrolipoyl]-L-lysyl-[glycine-cleavage complex H protein] + CO2. Its function is as follows. The glycine cleavage system catalyzes the degradation of glycine. The P protein binds the alpha-amino group of glycine through its pyridoxal phosphate cofactor; CO(2) is released and the remaining methylamine moiety is then transferred to the lipoamide cofactor of the H protein. The protein is Probable glycine dehydrogenase (decarboxylating) subunit 1 of Rhodospirillum centenum (strain ATCC 51521 / SW).